The primary structure comprises 340 residues: Arginase 1, mitochondrial (340 aa).

Residues 1 to 24 (MGGVAAGTRWIHHVRRLSAAKVSA) constitute a mitochondrion transit peptide. His-159, Asp-183, His-185, and Asp-187 together coordinate Mn(2+). Substrate-binding positions include 185–189 (HPDIY) and 193–195 (EGN). The Mn(2+) site is built by Asp-268 and Asp-270. Glu-311 is a substrate binding site.

The protein belongs to the arginase family. It depends on Mn(2+) as a cofactor.

Its subcellular location is the mitochondrion. The catalysed reaction is L-arginine + H2O = urea + L-ornithine. It participates in nitrogen metabolism; urea cycle; L-ornithine and urea from L-arginine: step 1/1. In terms of biological role, catalyzes the hydrolysis of L-arginine to urea and L-ornithine. The latter can be utilized in the urea cycle or as a precursor for the synthesis of both polyamines and proline. The protein is Arginase 1, mitochondrial (ARG1) of Oryza sativa subsp. japonica (Rice).